Reading from the N-terminus, the 538-residue chain is Syncytin-1 (538 aa).

The first 20 residues, 1 to 20 (MALPYHIFLFTVLLPSFTLT), serve as a signal peptide directing secretion. The Extracellular segment spans residues 21-443 (APPPCRCMTS…NTGPWGLLSQ (423 aa)). Asn-169 is a glycosylation site (N-linked (GlcNAc...) asparagine). The CXXC signature appears at 186–189 (CWIC). Intrachain disulfides connect Cys-186–Cys-189, Cys-186–Cys-405, and Cys-397–Cys-404. N-linked (GlcNAc...) asparagine glycans are attached at residues Asn-208, Asn-214, Asn-234, Asn-242, and Asn-281. Residues 320–340 (ILPFVIGAGVLGALGTGIGGI) are fusion peptide. Positions 380–396 (LQNRRALDLLTAERGGT) are immunosuppression. Positions 397–406 (CLFLGEECCY) match the CX6CC motif. A glycan (N-linked (GlcNAc...) asparagine) is linked at Asn-409. A helical transmembrane segment spans residues 444-464 (WMPWILPFLGPLAAIILLLLF). Residues 465 to 484 (GPCIFNLLVNFVSSRIEAVK) are essential for the fusiogenic function. Residues 465-538 (GPCIFNLLVN…LLRPNSAGSS (74 aa)) are Cytoplasmic-facing. The disordered stretch occupies residues 496 to 538 (KIYRRPLDRPASPRSDVNDIKGTPPEEISAAQPLLRPNSAGSS).

It belongs to the gamma type-C retroviral envelope protein family. HERV class-I W env subfamily. The mature envelope protein (Env) consists of a trimer of SU-TM heterodimers attached probably by a labile interchain disulfide bond. Interacts with the C-type lectin CD209/DC-SIGN. Specific enzymatic cleavages in vivo yield mature proteins. Envelope glycoproteins are synthesized as an inactive precursor that is heavily N-glycosylated and processed likely by furin in the Golgi to yield the mature SU and TM proteins. The cleavage site between SU and TM requires the minimal sequence [KR]-X-[KR]-R. The intracytoplasmic tail cleavage by the viral protease that is required for the fusiogenic activity of some retroviruses envelope proteins seems to have been lost during evolution. Post-translationally, the CXXC motif is highly conserved across a broad range of retroviral envelope proteins. It is thought to participate in the formation of a labile disulfide bond possibly with the CX6CC motif present in the transmembrane protein. Isomerization of the intersubunit disulfide bond to an SU intrachain disulfide bond is thought to occur upon receptor recognition in order to allow membrane fusion. In terms of tissue distribution, expressed at higher level in placental syncytiotrophoblast. Expressed at intermediate level in testis. Seems also to be found at low level in adrenal tissue, bone marrow, breast, colon, kidney, ovary, prostate, skin, spleen, thymus, thyroid, brain and trachea. Both mRNA and protein levels are significantly increased in the brain of individuals with multiple sclerosis, particularly in astrocytes and microglia.

It localises to the cell membrane. It is found in the virion. In terms of biological role, this endogenous retroviral envelope protein has retained its original fusogenic properties and participates in trophoblast fusion and the formation of a syncytium during placenta morphogenesis. May induce fusion through binding of SLC1A4 and SLC1A5. Its function is as follows. Endogenous envelope proteins may have kept, lost or modified their original function during evolution. Retroviral envelope proteins mediate receptor recognition and membrane fusion during early infection. The surface protein (SU) mediates receptor recognition, while the transmembrane protein (TM) acts as a class I viral fusion protein. The protein may have at least 3 conformational states: pre-fusion native state, pre-hairpin intermediate state, and post-fusion hairpin state. During viral and target cell membrane fusion, the coiled coil regions (heptad repeats) assume a trimer-of-hairpins structure, positioning the fusion peptide in close proximity to the C-terminal region of the ectodomain. The formation of this structure appears to drive apposition and subsequent fusion of membranes. This is Syncytin-1 (ERVW-1) from Homo sapiens (Human).